The following is a 2289-amino-acid chain: MKGHQFKSWIFELREIVREIKNSHYFLDSWTQFNSVGSFIHIFFHQERFRKLLDPRIWSILLSRNSQGSTSNRYFTIKSVVLFVVAALLYRINNRNMVESKNLYLKGLLPIPMNSIGPRNDTSEESFGSSNINRLILSLLYLTKGKKISESSFRDPKESTWVLPITQKCIMPESNWSSRWWRNWIGKKRDFCCKISNETVAGIDISFKEKDIKYLEFLFVYYMDDPIRKGHDWELFDRLSPSKRRNIINLNSGQLFEILVKDWICYLMFAFREKIPIEVEGFFKQQGAGSTIQSNDIEHVSHLFSRNKWAISLQNCAQFNMWQFHQDLFVSWGKNPHESDFLRKISRENWIWLDNVWLVNKDRFFSKVRNVSSNIQYDSTRSSFVQVTDSSQLKGSSDQFIDHFDSISNEDSEYHTLINQREIQQLKERSILWDPSFIQTEGREIESDRFPKYLSGYSSMPRLFTEREKRMNNHLLPEESEEFIGNPTRPIRSFFSDRWSELHLGSNPTERSTRDQKLLKKEQDVSFVPSRRSENKEIVNIFKIITYLQNNVSIHPISSDLGCDMVPKDELDMDSSNKISFLNKNPFFDLFHLFHERKRGGYTLRHDFESEERFQEMADLFTLSITEPDLVYHKGFAFSIDSYGLDQRQFLKEVFNSRDESKKKSLLVLPPIFYEENESFYRRIRQNWVRISCGNDLEDPKQKRVVFASNNIMEAVNQYRLIRNLIQIQFQYSPYGYIRNVLNRFFLMKRPDRNFEYGIQRDQIGNDTLNHRTIMKDTINQHLSNLKKSQKKGFDPLIFLSRTERSINRDPNAYRYKWSNGSKNFQEHLEHFVSERKSRFQVVFDRLCINQYSIDWSEVIDQKDLSKSLRFFLSKLLRFFLSKLLLFLSNSLPFFFVSFENIPIHRSEIHIYELKGPNDQLCNQLLESIGLQIVHLKKLKPFLLDDHNTSQKSKFLINGGTISPFLFNKIPKWMIDSFHTRKNRRKSFDNTDSYFSMVSHDQDNWLNPVKPFQRSSLISSFSKANRLRFLNNPHHFCFYCNKRFPFYVEKARLNNYDFTYGQFLTILFIRNKIFSSCGGKKKHAFLERDTISPSPIESQVSNIFISKDFPQSGDERYNLYKSFHFPIRSDPLVRRAIYSIADISGTPLIEGQRVNFERTYCQTLSDMNLSDSEEKSLHQYLNFNSNMGLIHTPCSEKYLPSEKRKKWSLCLKKCVDKGQMDRTFQRDSAFSTLSKWNLFQTYMPWFFTSTGYKYLNLIFLDTFSDLLRILSSSPKFVSIFHDIMHGLDISWRILQKKWCLPQRNLISEISSKSLHNLLLSEEMIHRNNESSLISTHLRSPNVREVLYSILFLLLVAGYIVRTHLLFVSRAYSELQTEFEKIKSLMIPSYMIELRKLLDRYPTSELNSFWLKNLFLVALEQLGDCLEEIRGSGGNMLWGGDPAYGVKSIRSKKKDLNINFIDIIDLISIIPNPINRITFSRNTRHLSHTSKEIYSLIRKRKNVSGDWIDDKIESWVANSDSIDDKEREFLVQFSTLRAEKRIDQILLSLTHSDHLSKNESGYQMIEQPGTIYLRYLVDIHKKYLMNYEFNTSCLAERRIFLAHYQTITYSQTSCGANSFHFPSHGKPFSLRLALSPSRSILVIGSIGTGRSYLVKYLATTSYVPFITVFLNKFLDNKPKGFFIDDIDIDDSDDIDASNDIDRELDTELELLTMMNALTMDMMSEIDRFYITLQFELAKAMSPCIIWIPNIHDLDVNESNYLALGLLVNSLSRDCERCSTRNILVIASTHIPQKVDPALIAPNKLNTCIKIRRLLIPQQRKHFFTLSYTRGFHLEKKMFHTNGFESITMGSSARDLVALTNEALSISITQKKSIIDTNTIRSALHRQTWDLRSQVRSVQDHGILFYQIGRAVAQNVLISNCPIDPISIYMKKKSCNEGDSYLYKWYFELGTSMKKFTILLYLLSCSAGSVTQDLWSLPGPDEKNRITSYGFVENDSDLVHGLLEVQGALVGSSRTEKDCSQFDNDRVTLLFRSEPRNPLYMMQNGSCSIVDQRFLYEKYESEFEEGEGEGVLDPQQIEEDLFNHIVWAPRIWRPRGFLFDCIERPNELGFPYLAGSFRGKRIIYDEKYELQENDSEFLQSGTMQYQRRDRSSKEQGFFRISQFIWDPADPLFFLFKDQPFVSVFSHREFFADEEMSKGLFTSQTDPPTSIYKRWFIKNTQEKHFELLIQRQRWLRTNSSLSNGFFRSNTLSESYQYLSNLFLSNGTLLDRMTKTLLKKRWLFPDEMKIGFM.

1643–1650 (GSIGTGRS) is a binding site for ATP.

The protein belongs to the Ycf2 family.

It localises to the plastid. The protein localises to the chloroplast stroma. In terms of biological role, probable ATPase of unknown function. Its presence in a non-photosynthetic plant (Epifagus virginiana) and experiments in tobacco indicate that it has an essential function which is probably not related to photosynthesis. This Aethionema grandiflorum (Persian stone-cress) protein is Protein Ycf2.